The chain runs to 67 residues: Cysteine-rich venom protein bucarin (67 aa).

Residues 13–58 (VDKHNALRRSVRPTARNMLQMEWNSNAAQNAKRFADRCTFAHSPPH) enclose the SCP domain.

It belongs to the CRISP family. Contains 8 disulfide bonds. As to expression, expressed by the venom gland.

It is found in the secreted. In terms of biological role, blocks contraction of smooth muscle elicited by high potassium-induced depolarization, but does not block caffeine-stimulated contraction. May target voltage-gated calcium channels on smooth muscle. In Bungarus candidus (Malayan krait), this protein is Cysteine-rich venom protein bucarin.